The following is a 361-amino-acid chain: Queuine tRNA-ribosyltransferase (361 aa).

The active-site Proton acceptor is the Asp-92. Substrate is bound by residues 92 to 96 (DSGGF), Asp-146, Gln-189, and Gly-216. The segment at 247–253 (GVGKPAD) is RNA binding. Asp-266 functions as the Nucleophile in the catalytic mechanism. The tract at residues 271–275 (TRSGR) is RNA binding; important for wobble base 34 recognition. Residues Cys-304, Cys-306, Cys-309, and His-335 each contribute to the Zn(2+) site.

It belongs to the queuine tRNA-ribosyltransferase family. As to quaternary structure, homodimer. Within each dimer, one monomer is responsible for RNA recognition and catalysis, while the other monomer binds to the replacement base PreQ1. It depends on Zn(2+) as a cofactor.

The catalysed reaction is 7-aminomethyl-7-carbaguanine + guanosine(34) in tRNA = 7-aminomethyl-7-carbaguanosine(34) in tRNA + guanine. It functions in the pathway tRNA modification; tRNA-queuosine biosynthesis. In terms of biological role, catalyzes the base-exchange of a guanine (G) residue with the queuine precursor 7-aminomethyl-7-deazaguanine (PreQ1) at position 34 (anticodon wobble position) in tRNAs with GU(N) anticodons (tRNA-Asp, -Asn, -His and -Tyr). Catalysis occurs through a double-displacement mechanism. The nucleophile active site attacks the C1' of nucleotide 34 to detach the guanine base from the RNA, forming a covalent enzyme-RNA intermediate. The proton acceptor active site deprotonates the incoming PreQ1, allowing a nucleophilic attack on the C1' of the ribose to form the product. After dissociation, two additional enzymatic reactions on the tRNA convert PreQ1 to queuine (Q), resulting in the hypermodified nucleoside queuosine (7-(((4,5-cis-dihydroxy-2-cyclopenten-1-yl)amino)methyl)-7-deazaguanosine). The protein is Queuine tRNA-ribosyltransferase of Rickettsia rickettsii (strain Iowa).